The chain runs to 223 residues: Alpha-S2-casein (223 aa).

The signal sequence occupies residues 1–15; the sequence is MKFFIFTCLLAVALA. Phosphoserine occurs at positions 23, 24, 25, 72, 73, 74, 77, 145, 147, 151, and 159. The segment at residues 77–141 is a repeat; that stretch reads SAEVAPEEIK…AGPFTPTVNR (65 aa). The segment at residues 159–223 is a repeat; that stretch reads STEVFTKKTK…TNAIPYVRYL (65 aa).

This sequence belongs to the alpha-casein family. As to expression, mammary gland specific. Secreted in milk.

The protein resides in the secreted. Functionally, important role in the capacity of milk to transport calcium phosphate. This chain is Alpha-S2-casein (CSN1S2), found in Capra hircus (Goat).